The primary structure comprises 367 residues: Secondary metabolism regulator laeA (367 aa).

Positions 1-82 are disordered; that stretch reads MFGQQQQQQP…PETYPGHEEN (82 aa). A compositionally biased stretch (polar residues) spans 19 to 41; the sequence is LNHNSRWTPPNESAQPRRSSNAM. 2 stretches are compositionally biased toward basic and acidic residues: residues 47 to 56 and 71 to 82; these read TDRDPAEGHP and KSPETYPGHEEN.

The protein belongs to the methyltransferase superfamily. LaeA methyltransferase family. In terms of assembly, component of the heterotrimeric velvet complex composed of laeA, veA and velB; VeA acting as a bridging protein between laeA and velB.

The protein resides in the nucleus. The enzyme catalyses L-methionyl-[protein] + S-adenosyl-L-methionine = S-methyl-L-methionyl-[protein] + S-adenosyl-L-homocysteine. Its function is as follows. Methyltransferase that performs automethylation. No other methyl-accepting substrate has been identified yet. Component of the velvet transcription factor complex that acts as a global regulator for secondary metabolite gene expression. Controls the expression of the monacolin K gene clusters. Also regulates pigmentation. The chain is Secondary metabolism regulator laeA from Monascus pilosus (Red mold).